We begin with the raw amino-acid sequence, 256 residues long: Protein LIKE COV 1 (256 aa).

The segment covering 1-10 (MANRERDREL) has biased composition (basic and acidic residues). The segment at 1 to 39 (MANRERDRELLIPVADFGDKDDGSSSKPSSSSSASSSHQ) is disordered. The Cytoplasmic portion of the chain corresponds to 1 to 60 (MANRERDRELLIPVADFGDKDDGSSSKPSSSSSASSSHQSGHETLSLFIRGWASKKFMTG). Over residues 25–39 (SSKPSSSSSASSSHQ) the composition is skewed to low complexity. Residues 61–81 (CVILLPIAVTFYTTWWFIHFV) traverse the membrane as a helical segment. Topologically, residues 82–93 (DGFFSPIYALLG) are extracellular. A helical transmembrane segment spans residues 94–114 (INIFGFGFLTSIAFIFLVGVF). Residues 115–256 (MSSWLGASVL…KPLASIGNES (142 aa)) are Cytoplasmic-facing.

The protein belongs to the plant COV1 protein family. In terms of tissue distribution, expressed at low levels in flowers, stems, roots and leaves.

The protein resides in the membrane. In Arabidopsis thaliana (Mouse-ear cress), this protein is Protein LIKE COV 1.